Here is a 1699-residue protein sequence, read N- to C-terminus: Hybrid signal transduction histidine kinase E (1699 aa).

Disordered stretches follow at residues 1 to 32 (MDKL…NLEN) and 58 to 97 (NNII…NPNV). Positions 7-32 (NNNLSPPSSPSSSTTTPNLSSTNLEN) are enriched in low complexity. 6 helical membrane-spanning segments follow: residues 142 to 162 (CILL…LIFL), 164 to 184 (SFYP…IVST), 191 to 211 (LVAL…FLQI), 238 to 258 (LNFL…IFFP), 262 to 282 (FSIT…LISI), and 295 to 315 (NLIV…ILSI). Residues 412-432 (ITNGGNNKQTSTTSANSTPRY) show a composition bias toward polar residues. 2 disordered regions span residues 412–439 (ITNG…NNNN) and 542–593 (LLNN…NISN). Residues 544–593 (NNNNNNNNNNNNNNNNNNNNNNNNNNSNNNNNNNSNNNNNNNNINNNISN) show a composition bias toward low complexity. The Histidine kinase domain occupies 678 to 950 (TVSHEVRTPI…AFSFTSILST (273 aa)). Phosphohistidine; by autocatalysis is present on H681. Disordered regions lie at residues 819–866 (NNNN…NNNN), 1018–1054 (NNNN…NDNN), 1186–1239 (KKQQ…RKSS), 1252–1294 (MVQV…NPNN), and 1351–1406 (SIPI…SPPP). The segment covering 1198-1212 (MGDTLSSTKSPQYTN) has biased composition (polar residues). A compositionally biased stretch (low complexity) spans 1219–1239 (SSSSNGSLNKSNRSNLLRKSS). Residues 1271 to 1282 (KGNNSNPNSTEL) are compositionally biased toward polar residues. 2 stretches are compositionally biased toward low complexity: residues 1283-1294 (NSTNSVNGNPNN) and 1355-1392 (NINN…NNNN). Positions 1575–1695 (NALIVDDTEL…TLKDTLLKWG (121 aa)) constitute a Response regulatory domain. D1625 carries the 4-aspartylphosphate modification.

The protein localises to the membrane. It catalyses the reaction ATP + protein L-histidine = ADP + protein N-phospho-L-histidine.. May act in a signal transduction pathway. This protein undergoes an ATP-dependent autophosphorylation at a conserved histidine residue in the kinase core, and a phosphoryl group is then transferred to a conserved aspartate residue in the receiver domain. This chain is Hybrid signal transduction histidine kinase E (dhkE), found in Dictyostelium discoideum (Social amoeba).